The following is a 239-amino-acid chain: MADS-box transcription factor 34 (239 aa).

The 61-residue stretch at 1-61 (MGRGKVVLQR…GRLYQFSSSS (61 aa)) folds into the MADS-box domain. The region spanning 88 to 178 (MQNNYQEYVN…KRKLDEIDVE (91 aa)) is the K-box domain. The tract at residues 179 to 208 (AAPPQPPWNGNCSNGHGGGGGVFSSEPPQP) is disordered.

In terms of tissue distribution, highly expressed in leaves and at low levels in roots and spikelets (rice flower).

The protein localises to the nucleus. Probable transcription factor. This is MADS-box transcription factor 34 (MADS34) from Oryza sativa subsp. japonica (Rice).